Consider the following 530-residue polypeptide: ATP synthase subunit alpha (530 aa).

Position 169 to 176 (169 to 176 (GDRQTGKT)) interacts with ATP.

It belongs to the ATPase alpha/beta chains family. As to quaternary structure, F-type ATPases have 2 components, CF(1) - the catalytic core - and CF(0) - the membrane proton channel. CF(1) has five subunits: alpha(3), beta(3), gamma(1), delta(1), epsilon(1). CF(0) has three main subunits: a(1), b(2) and c(9-12). The alpha and beta chains form an alternating ring which encloses part of the gamma chain. CF(1) is attached to CF(0) by a central stalk formed by the gamma and epsilon chains, while a peripheral stalk is formed by the delta and b chains.

The protein resides in the cell membrane. The enzyme catalyses ATP + H2O + 4 H(+)(in) = ADP + phosphate + 5 H(+)(out). Produces ATP from ADP in the presence of a proton gradient across the membrane. The alpha chain is a regulatory subunit. The sequence is that of ATP synthase subunit alpha from Mycoplasmopsis synoviae (strain 53) (Mycoplasma synoviae).